The chain runs to 313 residues: Aspartate carbamoyltransferase catalytic subunit (313 aa).

Carbamoyl phosphate-binding residues include arginine 53 and threonine 54. Lysine 82 is an L-aspartate binding site. 3 residues coordinate carbamoyl phosphate: arginine 103, histidine 131, and glutamine 134. L-aspartate is bound by residues arginine 163 and arginine 224. The carbamoyl phosphate site is built by leucine 263 and proline 264.

The protein belongs to the aspartate/ornithine carbamoyltransferase superfamily. ATCase family. In terms of assembly, heterooligomer of catalytic and regulatory chains.

It carries out the reaction carbamoyl phosphate + L-aspartate = N-carbamoyl-L-aspartate + phosphate + H(+). It participates in pyrimidine metabolism; UMP biosynthesis via de novo pathway; (S)-dihydroorotate from bicarbonate: step 2/3. Its function is as follows. Catalyzes the condensation of carbamoyl phosphate and aspartate to form carbamoyl aspartate and inorganic phosphate, the committed step in the de novo pyrimidine nucleotide biosynthesis pathway. The chain is Aspartate carbamoyltransferase catalytic subunit from Halorubrum lacusprofundi (strain ATCC 49239 / DSM 5036 / JCM 8891 / ACAM 34).